The primary structure comprises 348 residues: MAVTRAKIALDAMGGDYAPEEIVIGAIRASQELDVDIFLVGDRQAIEDCLNRHPHQGINLTIVDAEGVVEMEEDAVVVRRKPKASINVAMNLVKEKQADAVVSAGHSGAAMAAALLRLGRLKGIDRPAIGTLFPTMVPGKSVIVLDVGANVDCKPKYLEQFALMGTVYSQYVLGVDSPKVGLLNIGEESNKGNTLALQTHELLQSNPEIPFVGNAEGRDVLSGNFDVIVCDGFVGNIVLKFAEAVGEILLSIVKEELPRGWRGKLGAIILAPNLKRIKQRVDHAEHGGALLFGVDGVCVISHGSSRSGSIFNAIRLAKEAIDNQVSVRINSSTSLLMERQKTEELQNI.

The protein belongs to the PlsX family. Homodimer. Probably interacts with PlsY.

The protein localises to the cytoplasm. The enzyme catalyses a fatty acyl-[ACP] + phosphate = an acyl phosphate + holo-[ACP]. Its pathway is lipid metabolism; phospholipid metabolism. Its function is as follows. Catalyzes the reversible formation of acyl-phosphate (acyl-PO(4)) from acyl-[acyl-carrier-protein] (acyl-ACP). This enzyme utilizes acyl-ACP as fatty acyl donor, but not acyl-CoA. The protein is Phosphate acyltransferase of Synechocystis sp. (strain ATCC 27184 / PCC 6803 / Kazusa).